The sequence spans 68 residues: UPF0435 protein SAB1812c (68 aa).

The protein belongs to the UPF0435 family.

The sequence is that of UPF0435 protein SAB1812c from Staphylococcus aureus (strain bovine RF122 / ET3-1).